The sequence spans 76 residues: Acyl carrier protein (76 aa).

A Carrier domain is found at 2–76 (SDIAERVKKI…QAIDYIQSHT (75 aa)). Serine 36 is subject to O-(pantetheine 4'-phosphoryl)serine.

This sequence belongs to the acyl carrier protein (ACP) family. Post-translationally, 4'-phosphopantetheine is transferred from CoA to a specific serine of apo-ACP by AcpS. This modification is essential for activity because fatty acids are bound in thioester linkage to the sulfhydryl of the prosthetic group.

It localises to the cytoplasm. It participates in lipid metabolism; fatty acid biosynthesis. Carrier of the growing fatty acid chain in fatty acid biosynthesis. This is Acyl carrier protein from Methylococcus capsulatus (strain ATCC 33009 / NCIMB 11132 / Bath).